A 148-amino-acid chain; its full sequence is Nucleoside diphosphate kinase B (148 aa).

Residues K9, F57, R85, T91, R102, and N112 each contribute to the ATP site. H115 acts as the Pros-phosphohistidine intermediate in catalysis.

The protein belongs to the NDK family. Requires Mg(2+) as cofactor.

The catalysed reaction is a 2'-deoxyribonucleoside 5'-diphosphate + ATP = a 2'-deoxyribonucleoside 5'-triphosphate + ADP. It catalyses the reaction a ribonucleoside 5'-diphosphate + ATP = a ribonucleoside 5'-triphosphate + ADP. Its function is as follows. Major role in the synthesis of nucleoside triphosphates other than ATP. The ATP gamma phosphate is transferred to the NDP beta phosphate via a ping-pong mechanism, using a phosphorylated active-site intermediate. This is Nucleoside diphosphate kinase B from Flaveria bidentis (Coastal plain yellowtops).